The following is a 415-amino-acid chain: Peptide chain release factor subunit 1-2 (415 aa).

This sequence belongs to the eukaryotic release factor 1 family. In terms of assembly, heterodimer of two subunits, one of which binds GTP.

It is found in the cytoplasm. In terms of biological role, directs the termination of nascent peptide synthesis (translation) in response to the termination codons UAA, UAG and UGA. In Methanosarcina acetivorans (strain ATCC 35395 / DSM 2834 / JCM 12185 / C2A), this protein is Peptide chain release factor subunit 1-2.